A 235-amino-acid polypeptide reads, in one-letter code: TIR domain-containing adapter molecule 2 (235 aa).

The disordered stretch occupies residues 1 to 39 (MGIGKSKINSCPLSLSWGKRHSVDTSPGYHESDSKKSED). The N-myristoyl glycine moiety is linked to residue Gly2. A Phosphoserine; by PKC/PRKCE modification is found at Ser16. Residues 30 to 39 (HESDSKKSED) show a composition bias toward basic and acidic residues. Residues 73–229 (AEEEVFLKFV…TIWKETRNMV (157 aa)) form the TIR domain. Phosphotyrosine is present on Tyr167.

As to quaternary structure, homodimer. Interacts with TLR4, TICAM1, IRF3 and IRF7 in response to LPS. Interacts with IL1R1, IL1RAP, IRAK2, IRAK3 and TRAF6. Interacts with protein kinase-inactive mutants of IRAK1 and IRAK4. Isoform 1 interacts with isoform 2; the interaction occurs in late endosomes and disrupts the interaction between isoform 1 and TICAM1. Interacts with MYD88; the interaction decreases after IL-18 stimulation in a time-dependent manner. Interacts with IL18R1 and IL18RAP. Interacts with TLR2. Interacts with RAB11FIP2. Post-translationally, phosphorylated by PRKCE in response to LPS. Phosphorylation is essential for its function. It is depleted from the membrane upon phosphorylation. Tyrosine phosphorylation is inhibited by phosphatase PTPN4. Isoform 1 is myristoylated. Required for membrane association which is critical for its ability to initiate efficient signaling. In terms of tissue distribution, expressed in spleen, prostate, testis, uterus, small intestine, colon, peripheral blood leukocytes, heart, placenta, lung, liver, skeletal muscle, and pancreas Isoform 2 is ubiquitously expressed (at lower levels than isoform 1).

The protein localises to the cytoplasm. The protein resides in the golgi apparatus. Its subcellular location is the cell membrane. It localises to the endoplasmic reticulum. It is found in the early endosome membrane. The protein localises to the late endosome membrane. The protein resides in the cell projection. Its subcellular location is the phagocytic cup. Functions as a sorting adapter in different signaling pathways to facilitate downstream signaling leading to type I interferon induction. In TLR4 signaling, physically bridges TLR4 and TICAM1 and functionally transmits signal to TICAM1 in early endosomes after endocytosis of TLR4. In TLR2 signaling, physically bridges TLR2 and MYD88 and is required for the TLR2-dependent movement of MYD88 to endosomes following ligand engagement. Involved in IL-18 signaling and is proposed to function as a sorting adapter for MYD88 in IL-18 signaling during adaptive immune response. Forms a complex with RAB11FIP2 that is recruited to the phagosomes to promote the activation of the actin-regulatory GTPases RAC1 and CDC42 and subsequent phagocytosis of Gram-negative bacteria. In terms of biological role, proposed to inhibit LPS-TLR4 signaling at the late endosome by interaction with isoform 1 thereby disrupting the association of isoform 1 with TICAM1. May be involved in TLR4 degradation in late endosomes. The protein is TIR domain-containing adapter molecule 2 (TICAM2) of Homo sapiens (Human).